The primary structure comprises 122 residues: Basic phospholipase A2 F15 (122 aa).

Disulfide bonds link Cys26/Cys115, Cys28/Cys44, Cys43/Cys95, Cys49/Cys122, Cys50/Cys88, Cys57/Cys81, and Cys75/Cys86. 3 residues coordinate Ca(2+): Tyr27, Gly29, and Gly31. The active site involves His47. Asp48 provides a ligand contact to Ca(2+). Asp89 is an active-site residue.

The protein belongs to the phospholipase A2 family. Group II subfamily. D49 sub-subfamily. When this protein is associated with crotapotin (F5 or F7), it forms the crotoxin protein. It depends on Ca(2+) as a cofactor. As to expression, expressed by the venom gland.

It is found in the secreted. The catalysed reaction is a 1,2-diacyl-sn-glycero-3-phosphocholine + H2O = a 1-acyl-sn-glycero-3-phosphocholine + a fatty acid + H(+). Its activity is regulated as follows. Activated by heparin. Inhibited by its chaperone crotapotin. Snake venom phospholipase A2 (PLA2) that shows moderate neurotoxic activity in isolated mouse phrenic nerve diaphragm but shows high neurotoxic activity in a chick biventer cervis preparation. Also shows a high bactericidal effect against both Gram-negative and Gram-positive bacteria. PLA2 catalyzes the calcium-dependent hydrolysis of the 2-acyl groups in 3-sn-phosphoglycerides. The protein is Basic phospholipase A2 F15 of Crotalus durissus terrificus (South American rattlesnake).